The sequence spans 296 residues: ATP phosphoribosyltransferase (296 aa).

This sequence belongs to the ATP phosphoribosyltransferase family. Long subfamily. It depends on Mg(2+) as a cofactor.

It localises to the cytoplasm. The catalysed reaction is 1-(5-phospho-beta-D-ribosyl)-ATP + diphosphate = 5-phospho-alpha-D-ribose 1-diphosphate + ATP. Its pathway is amino-acid biosynthesis; L-histidine biosynthesis; L-histidine from 5-phospho-alpha-D-ribose 1-diphosphate: step 1/9. With respect to regulation, feedback inhibited by histidine. Functionally, catalyzes the condensation of ATP and 5-phosphoribose 1-diphosphate to form N'-(5'-phosphoribosyl)-ATP (PR-ATP). Has a crucial role in the pathway because the rate of histidine biosynthesis seems to be controlled primarily by regulation of HisG enzymatic activity. This Halorubrum lacusprofundi (strain ATCC 49239 / DSM 5036 / JCM 8891 / ACAM 34) protein is ATP phosphoribosyltransferase.